The sequence spans 469 residues: Glutamate--tRNA ligase (469 aa).

The short motif at 11–21 (PSPTGFIHLGN) is the 'HIGH' region element. Positions 118–131 (GEKPRYDGTWRPEP) are enriched in basic and acidic residues. Residues 118-139 (GEKPRYDGTWRPEPGKVLPEPP) are disordered. Residues 243 to 247 (KMSKR) carry the 'KMSKS' region motif. Lysine 246 provides a ligand contact to ATP.

Belongs to the class-I aminoacyl-tRNA synthetase family. Glutamate--tRNA ligase type 1 subfamily. As to quaternary structure, monomer.

The protein localises to the cytoplasm. It carries out the reaction tRNA(Glu) + L-glutamate + ATP = L-glutamyl-tRNA(Glu) + AMP + diphosphate. In terms of biological role, catalyzes the attachment of glutamate to tRNA(Glu) in a two-step reaction: glutamate is first activated by ATP to form Glu-AMP and then transferred to the acceptor end of tRNA(Glu). The sequence is that of Glutamate--tRNA ligase from Burkholderia pseudomallei (strain 1106a).